Reading from the N-terminus, the 433-residue chain is O-methyltransferase VdtC (433 aa).

D284 contacts S-adenosyl-L-methionine. H335 acts as the Proton acceptor in catalysis.

It belongs to the class I-like SAM-binding methyltransferase superfamily. Cation-independent O-methyltransferase family. COMT subfamily.

It carries out the reaction 7,9,10-trihydroxy-3-(2-oxopropyl)-1H-benzo[g]isochromen-1-one + S-adenosyl-L-methionine = 9,10-dihydroxy-7-methoxy-3-(2-oxopropyl)-1H-benzo[g]isochromen-1-one + S-adenosyl-L-homocysteine + H(+). Its pathway is secondary metabolite biosynthesis. Its function is as follows. O-methyltransferase; part of the gene cluster that mediates the biosynthesis of viriditoxin, one of the 'classical' secondary metabolites produced by fungi and that has antibacterial activity. The first step is performed by the polyketide synthase VdtA which condenses one acetyl-CoA and 6 malonyl-CoA units to form the heptaketide monomer backbone of viriditoxin. The product of VdtA is then O-methylated on C7 by the O-methyltransferase VdtC. The O-methyl group is important for the stereoselective coupling of the monomers at the final step of viriditoxin biosynthesis. The short-chain dehydrogenase/reductase VdtF then acts as a stereospecific reductase converting the pyrone to dihydropyrone via the reduction of the C3-C4 double bond. The FAD-binding monooxygenase VdtE then converts the ketone group into a methyl-ester group to yield semi-viriditoxin. Finally, the laccase VdtB is involved in dimerization of 2 semi-viriditoxin molecules to yield the final viriditoxin. VdtB is responsible for the regioselective 6,6'-coupling of semi-viriditoxin, which yields (M)-viriditoxin and (P)-viriditoxin at a ratio of 1:2. The non-catalytic carboxylesterase-like protein VdtD affects the stereochemistical outcome of the coupling. The highly reducing polyketide synthase VdtX is not involved in viriditoxin synthesis, but might possibly play a role in the production of additional metabolites not identified yet. The sequence is that of O-methyltransferase VdtC from Byssochlamys spectabilis (Paecilomyces variotii).